The chain runs to 269 residues: uncharacterized protein (269 aa).

Residues 152–197 enclose the RPE1 insert domain; sequence RYFSKPAYRNAFKANTIRATTAYKKVFNDPSLGSTYPLEVPLGKMS.

This is an uncharacterized protein from Rickettsia prowazekii (strain Madrid E).